A 540-amino-acid polypeptide reads, in one-letter code: Pentatricopeptide repeat-containing protein At3g29290 (540 aa).

12 PPR repeats span residues 106–140 (NEET…GLQP), 141–175 (NAHA…ENVT), 177–205 (HTYS…LERE), 213–247 (DVVL…GHIG), 248–282 (TEIT…KISL), 283–317 (REDA…GMKP), 318–352 (NLVA…GHKP), 353–387 (DEYT…NLCC), 389–423 (NEYL…GLTV), 424–458 (STSS…DCKP), 459–487 (NTFT…KKVE), and 489–523 (DVSL…GLEP).

This sequence belongs to the PPR family. P subfamily.

The protein is Pentatricopeptide repeat-containing protein At3g29290 (EMB2076) of Arabidopsis thaliana (Mouse-ear cress).